Reading from the N-terminus, the 398-residue chain is Lysophospholipid transporter LplT (398 aa).

11 helical membrane-spanning segments follow: residues 17-37 (AVLVSQFFSAFADNALLFAIL), 52-72 (ILQIVFVLAYILLAPFVGQIA), 90-110 (LGAFTICLGYDPFLGYALVGV), 137-157 (GLMEASTIIAILTGSVVGGFL), 163-183 (AIALLVCALMYGIAVVANFFI), 226-246 (LFWGAGITLRFLLVLWVPVVL), 256-276 (ILNVMVAVGIIIGAGAAARFI), 285-305 (MPAGVLIGVMVVIFAVQHSIW), 309-329 (VLLIILGIFGGLFIVPLNALL), 352-372 (IAMLLMLGLYSLVIKIGVPVV), and 373-393 (TTGIGFGTLLALTITSLWIWN).

This sequence belongs to the major facilitator superfamily. LplT (TC 2.A.1.42) family.

It is found in the cell inner membrane. Functionally, catalyzes the facilitated diffusion of 2-acyl-glycero-3-phosphoethanolamine (2-acyl-GPE) into the cell. This Photorhabdus laumondii subsp. laumondii (strain DSM 15139 / CIP 105565 / TT01) (Photorhabdus luminescens subsp. laumondii) protein is Lysophospholipid transporter LplT.